The following is a 244-amino-acid chain: MFKRGVKIEIIPAIDILGGRCVRLFQGDYAQETVYSSDPVGTAMRWQSLGAPRLHVVDLDGAADGQSVNFELIKEIANSALIPVEVGGGIRSMETVKKLLVAGVDRVILGTAAVENPELVKEICARYADSVAVSIDARNGKVATRGWVTNTEIDALELARSMKKLGIRRFIYTDISRDGTLSEPNFAAIRDLISAINVPVIASGGVSSLSHLRLLKDIGAEGAIVGKAIYTGDLNLKRAFEDLS.

The Proton acceptor role is filled by aspartate 15. Aspartate 136 functions as the Proton donor in the catalytic mechanism.

This sequence belongs to the HisA/HisF family.

It localises to the cytoplasm. It catalyses the reaction 1-(5-phospho-beta-D-ribosyl)-5-[(5-phospho-beta-D-ribosylamino)methylideneamino]imidazole-4-carboxamide = 5-[(5-phospho-1-deoxy-D-ribulos-1-ylimino)methylamino]-1-(5-phospho-beta-D-ribosyl)imidazole-4-carboxamide. Its pathway is amino-acid biosynthesis; L-histidine biosynthesis; L-histidine from 5-phospho-alpha-D-ribose 1-diphosphate: step 4/9. The sequence is that of 1-(5-phosphoribosyl)-5-[(5-phosphoribosylamino)methylideneamino] imidazole-4-carboxamide isomerase from Dehalococcoides mccartyi (strain CBDB1).